We begin with the raw amino-acid sequence, 360 residues long: Phospho-N-acetylmuramoyl-pentapeptide-transferase (360 aa).

A run of 10 helical transmembrane segments spans residues 21–41 (YITF…LWIG), 73–93 (TMGG…WADL), 98–118 (IWFV…DDYW), 132–152 (WKYF…YAVG), 168–188 (VMPQ…VGTS), 199–219 (GLAI…AWAT), 236–256 (AGEL…FLWY), 263–283 (VFMG…IAVL), 288–308 (LLLV…ILQV), and 338–358 (VIVR…VTLK).

This sequence belongs to the glycosyltransferase 4 family. MraY subfamily. It depends on Mg(2+) as a cofactor.

The protein resides in the cell inner membrane. The enzyme catalyses UDP-N-acetyl-alpha-D-muramoyl-L-alanyl-gamma-D-glutamyl-meso-2,6-diaminopimeloyl-D-alanyl-D-alanine + di-trans,octa-cis-undecaprenyl phosphate = di-trans,octa-cis-undecaprenyl diphospho-N-acetyl-alpha-D-muramoyl-L-alanyl-D-glutamyl-meso-2,6-diaminopimeloyl-D-alanyl-D-alanine + UMP. It functions in the pathway cell wall biogenesis; peptidoglycan biosynthesis. Its function is as follows. Catalyzes the initial step of the lipid cycle reactions in the biosynthesis of the cell wall peptidoglycan: transfers peptidoglycan precursor phospho-MurNAc-pentapeptide from UDP-MurNAc-pentapeptide onto the lipid carrier undecaprenyl phosphate, yielding undecaprenyl-pyrophosphoryl-MurNAc-pentapeptide, known as lipid I. This chain is Phospho-N-acetylmuramoyl-pentapeptide-transferase, found in Actinobacillus pleuropneumoniae serotype 5b (strain L20).